We begin with the raw amino-acid sequence, 237 residues long: MNTEVMHSTSTESDAQEKPQAMFDTSAMRVLAVLAEKEALTPDSYPMSLNALTNGCNQLTSRDPVMAMGEDEVREILQHLIQEKFIAEVNQAGARVSKYEHRLRMKWSLEQDKLAVLTILMLRGIQTAGEIRNRSGRLHEFASIADVEAGLQFLMDKYPPLVVRLPRAPGTKEARYASLLCGESYPETAEGAAYAASAAAGVSRQDRIAQLEGEVGALREEVAALAAQLQQFRQQFE.

Positions 1–13 (MNTEVMHSTSTES) are enriched in polar residues. A disordered region spans residues 1–21 (MNTEVMHSTSTESDAQEKPQA).

It belongs to the UPF0502 family.

This chain is UPF0502 protein HEAR1280, found in Herminiimonas arsenicoxydans.